Here is a 727-residue protein sequence, read N- to C-terminus: Protein edg-1 (727 aa).

A disordered region spans residues 703-727 (FAESSVKPTTSSAYGNSSNFSRYAD).

In terms of assembly, may interact with deps-1 and prg-1.

Its subcellular location is the cytoplasmic granule. Functionally, plays a role in regulating deps-1 cluster formation in the germline. In Caenorhabditis elegans, this protein is Protein edg-1.